We begin with the raw amino-acid sequence, 714 residues long: SEC14 domain and spectrin repeat-containing protein 1 (714 aa).

In terms of domain architecture, CRAL-TRIO spans 1 to 153; the sequence is MEASCILPVL…EFGGSLLYDH (153 aa). Spectrin repeat units follow at residues 275-381, 384-497, and 503-605; these read SQLE…NVLQ, YEFH…LKML, and FKCE…HRLE. The tract at residues 691 to 714 is disordered; it reads EAEQRLEEEEEEEEAALEVEPRES. Over residues 696-707 the composition is skewed to acidic residues; the sequence is LEEEEEEEEAAL.

It belongs to the SOLO family.

Functionally, may act as the primary docking protein directing membrane turnover and assembly of the transient receptor potential channels trpc4 and trpc5. Binds phospholipids. The sequence is that of SEC14 domain and spectrin repeat-containing protein 1 (sestd1) from Danio rerio (Zebrafish).